The following is a 365-amino-acid chain: Pyridoxal reductase, chloroplastic (365 aa).

The N-terminal 15 residues, 1 to 15, are a transit peptide targeting the chloroplast; it reads MALTLSTTKTFTNIN. Residue tyrosine 94 is the Proton donor of the active site.

This sequence belongs to the aldo/keto reductase family. Monomer. Expressed in cotyledons, embryos, flowers, shoots, roots and seeds.

Its subcellular location is the plastid. The protein localises to the chloroplast. It carries out the reaction pyridoxine + NADP(+) = pyridoxal + NADPH + H(+). The protein operates within cofactor degradation; B6 vitamer degradation; pyridoxal from pyridoxine (dehydrogenase route): step 1/1. Its function is as follows. Catalyzes the reduction of pyridoxal (PL) with NADPH and oxidation of pyridoxine (PN) with NADP(+). Involved in the PLP salvage pathway. This is Pyridoxal reductase, chloroplastic (PLR1) from Arabidopsis thaliana (Mouse-ear cress).